Here is a 192-residue protein sequence, read N- to C-terminus: Signal peptidase complex catalytic subunit sec11 (192 aa).

Residues 1–18 (MLSFLSSNLSNTRQSIAQ) lie on the Cytoplasmic side of the membrane. A helical; Signal-anchor for type II membrane protein membrane pass occupies residues 19 to 39 (VLNFALVLSTAFMLWKGLSVV). Residues 40–192 (TASSSPIVVV…MGLMVILQRE (153 aa)) are Lumenal-facing. Catalysis depends on charge relay system residues Ser53, His92, and Asp134. Residues 178–189 (VLLGIMGLMVIL) are C-terminal short (CTS) helix.

The protein belongs to the peptidase S26B family. In terms of assembly, component of the signal peptidase complex (SPC) composed of a catalytic subunit SEC11 and three accessory subunits SPC1, SPC2 and SPC3. The complex induces a local thinning of the ER membrane which is used to measure the length of the signal peptide (SP) h-region of protein substrates. This ensures the selectivity of the complex towards h-regions shorter than 18-20 amino acids. SPC associates with the translocon complex.

The protein resides in the endoplasmic reticulum membrane. The catalysed reaction is Cleavage of hydrophobic, N-terminal signal or leader sequences from secreted and periplasmic proteins.. Catalytic component of the signal peptidase complex (SPC) which catalyzes the cleavage of N-terminal signal sequences from nascent proteins as they are translocated into the lumen of the endoplasmic reticulum. Specifically cleaves N-terminal signal peptides that contain a hydrophobic alpha-helix (h-region) shorter than 18-20 amino acids. The polypeptide is Signal peptidase complex catalytic subunit sec11 (sec11) (Emericella nidulans (strain FGSC A4 / ATCC 38163 / CBS 112.46 / NRRL 194 / M139) (Aspergillus nidulans)).